The following is a 524-amino-acid chain: MISPFLVLAIGTCLTNSLVPEKEKDPKYWRDQAQETLKYALELQKLNTNVAKNVIMFLGDGMGVSTVTAARILKGQLHHNPGEETRLEMDKFPFVALSKTYNTNAQVPDSAGTATAYLCGVKANEGTVGVSAATERSRCNTTQGNEVTSILRWAKDAGKSVGIVTTTRVNHATPSAAYAHSADRDWYSDNEMPPEALSQGCKDIAYQLMHNIRDIDVIMGGGRKYMYPKNKTDVEYESDEKARGTRLDGLDLVDTWKSFKPRYKHSHFIWNRTELLTLDPHNVDYLLGLFEPGDMQYELNRNNVTDPSLSEMVVVAIQILRKNPKGFFLLVEGGRIDHGHHEGKAKQALHEAVEMDRAIGQAGSLTSSEDTLTVVTADHSHVFTFGGYTPRGNSIFGLAPMLSDTDKKPFTAILYGNGPGYKVVGGERENVSMVDYAHNNYQAQSAVPLRHETHGGEDVAVFSKGPMAHLLHGVHEQNYVPHVMAYAACIGANLGHCAPASSAGSLAAGPLLLALALYPLSVLF.

An N-terminal signal peptide occupies residues 1 to 17; sequence MISPFLVLAIGTCLTNS. Mg(2+) is bound at residue D60. Residues D60 and S110 each contribute to the Zn(2+) site. S110 serves as the catalytic Phosphoserine intermediate. Position 110 is a phosphoserine (S110). A disulfide bridge links C139 with C201. N140 is a glycosylation site (N-linked (GlcNAc...) asparagine). T173 is a binding site for Mg(2+). Residue N230 is glycosylated (N-linked (GlcNAc...) asparagine). E235 is a Ca(2+) binding site. N-linked (GlcNAc...) asparagine glycosylation occurs at N271. Residues F290 and E291 each coordinate Ca(2+). N-linked (GlcNAc...) asparagine glycosylation occurs at N303. D306 provides a ligand contact to Ca(2+). Residue E332 coordinates Mg(2+). 4 residues coordinate Zn(2+): D337, H341, D378, and H379. N-linked (GlcNAc...) asparagine glycosylation is present at N430. Position 454 (H454) interacts with Zn(2+). Cysteines 489 and 497 form a disulfide. S501 is lipidated: GPI-anchor amidated serine. Positions 502-524 are cleaved as a propeptide — removed in mature form; that stretch reads SAGSLAAGPLLLALALYPLSVLF.

It belongs to the alkaline phosphatase family. In terms of assembly, homodimer. Mg(2+) is required as a cofactor. The cofactor is Zn(2+). Ca(2+) serves as cofactor. N-glycosylated.

It is found in the cell membrane. The protein localises to the extracellular vesicle membrane. It localises to the mitochondrion membrane. Its subcellular location is the mitochondrion intermembrane space. It carries out the reaction a phosphate monoester + H2O = an alcohol + phosphate. The enzyme catalyses diphosphate + H2O = 2 phosphate + H(+). It catalyses the reaction pyridoxal 5'-phosphate + H2O = pyridoxal + phosphate. The catalysed reaction is phosphoethanolamine + H2O = ethanolamine + phosphate. It carries out the reaction N-phosphocreatine + H2O = creatine + phosphate. The enzyme catalyses ATP + H2O = ADP + phosphate + H(+). It catalyses the reaction ADP + H2O = AMP + phosphate + H(+). The catalysed reaction is AMP + H2O = adenosine + phosphate. Its activity is regulated as follows. Phosphatase activity is specifically inhibited by 5-((5-chloro-2-methoxyphenyl)sulfonamido)nicotinamide (SBI-425). Functionally, alkaline phosphatase that metabolizes various phosphate compounds and plays a key role in skeletal mineralization and adaptive thermogenesis. Has broad substrate specificity and can hydrolyze a considerable variety of compounds: however, only a few substrates, such as diphosphate (inorganic pyrophosphate; PPi), pyridoxal 5'-phosphate (PLP) and N-phosphocreatine are natural substrates. Plays an essential role in skeletal and dental mineralization via its ability to hydrolyze extracellular diphosphate, a potent mineralization inhibitor, to phosphate: it thereby promotes hydroxyapatite crystal formation and increases inorganic phosphate concentration. Acts in a non-redundant manner with PHOSPHO1 in skeletal mineralization: while PHOSPHO1 mediates the initiation of hydroxyapatite crystallization in the matrix vesicles (MVs), ALPL/TNAP catalyzes the spread of hydroxyapatite crystallization in the extracellular matrix. Also promotes dephosphorylation of osteopontin (SSP1), an inhibitor of hydroxyapatite crystallization in its phosphorylated state; it is however unclear whether ALPL/TNAP mediates SSP1 dephosphorylation via a direct or indirect manner. Catalyzes dephosphorylation of PLP to pyridoxal (PL), the transportable form of vitamin B6, in order to provide a sufficient amount of PLP in the brain, an essential cofactor for enzymes catalyzing the synthesis of diverse neurotransmitters. Additionally, also able to mediate ATP degradation in a stepwise manner to adenosine, thereby regulating the availability of ligands for purinergic receptors. Also capable of dephosphorylating microbial products, such as lipopolysaccharides (LPS) as well as other phosphorylated small-molecules, such as poly-inosine:cytosine (poly I:C). Acts as a key regulator of adaptive thermogenesis as part of the futile creatine cycle: localizes to the mitochondria of thermogenic fat cells and acts by mediating hydrolysis of N-phosphocreatine to initiate a futile cycle of creatine dephosphorylation and phosphorylation. During the futile creatine cycle, creatine and N-phosphocreatine are in a futile cycle, which dissipates the high energy charge of N-phosphocreatine as heat without performing any mechanical or chemical work. The chain is Alkaline phosphatase, tissue-nonspecific isozyme from Homo sapiens (Human).